The following is a 405-amino-acid chain: Argininosuccinate synthase (405 aa).

Residues 10–18 (AYSGGLDTS) and Ala37 each bind ATP. Residues Tyr88 and Ser93 each contribute to the L-citrulline site. Gly118 lines the ATP pocket. Positions 120, 124, and 125 each coordinate L-aspartate. Residue Asn124 coordinates L-citrulline. Residues Arg128, Ser179, Ser188, Glu264, and Tyr276 each contribute to the L-citrulline site.

It belongs to the argininosuccinate synthase family. Type 1 subfamily. As to quaternary structure, homotetramer.

It localises to the cytoplasm. The enzyme catalyses L-citrulline + L-aspartate + ATP = 2-(N(omega)-L-arginino)succinate + AMP + diphosphate + H(+). Its pathway is amino-acid biosynthesis; L-arginine biosynthesis; L-arginine from L-ornithine and carbamoyl phosphate: step 2/3. The protein is Argininosuccinate synthase of Nitrosococcus oceani (strain ATCC 19707 / BCRC 17464 / JCM 30415 / NCIMB 11848 / C-107).